Consider the following 248-residue polypeptide: Triosephosphate isomerase (248 aa).

Substrate contacts are provided by N10 and K12. H95 serves as the catalytic Electrophile. E165 (proton acceptor) is an active-site residue.

It belongs to the triosephosphate isomerase family. In terms of assembly, homodimer.

The protein resides in the cytoplasm. The catalysed reaction is D-glyceraldehyde 3-phosphate = dihydroxyacetone phosphate. It functions in the pathway carbohydrate biosynthesis; gluconeogenesis. The protein operates within carbohydrate degradation; glycolysis; D-glyceraldehyde 3-phosphate from glycerone phosphate: step 1/1. The sequence is that of Triosephosphate isomerase (TPI1) from Candida albicans (strain SC5314 / ATCC MYA-2876) (Yeast).